We begin with the raw amino-acid sequence, 575 residues long: Flagellin A (575 aa).

Repeat copies occupy residues 405–409, 411–415, and 447–450.

This sequence belongs to the bacterial flagellin family. Heteromer of flaA and flaB.

It localises to the secreted. Its subcellular location is the bacterial flagellum. Flagellin is the subunit protein which polymerizes to form the filaments of bacterial flagella. The sequence is that of Flagellin A (flaA) from Campylobacter jejuni.